The primary structure comprises 335 residues: Phosphate acyltransferase (335 aa).

This sequence belongs to the PlsX family. As to quaternary structure, homodimer. Probably interacts with PlsY.

The protein localises to the cytoplasm. The catalysed reaction is a fatty acyl-[ACP] + phosphate = an acyl phosphate + holo-[ACP]. The protein operates within lipid metabolism; phospholipid metabolism. Functionally, catalyzes the reversible formation of acyl-phosphate (acyl-PO(4)) from acyl-[acyl-carrier-protein] (acyl-ACP). This enzyme utilizes acyl-ACP as fatty acyl donor, but not acyl-CoA. This Streptococcus equi subsp. equi (strain 4047) protein is Phosphate acyltransferase.